The following is a 146-amino-acid chain: 3-dehydroquinate dehydratase (146 aa).

The active-site Proton acceptor is the Tyr-22. Residues Asn-73, His-79, and Asp-86 each contribute to the substrate site. The Proton donor role is filled by His-99. Substrate is bound by residues 100 to 101 and Arg-110; that span reads LS.

This sequence belongs to the type-II 3-dehydroquinase family. Homododecamer.

It carries out the reaction 3-dehydroquinate = 3-dehydroshikimate + H2O. It functions in the pathway metabolic intermediate biosynthesis; chorismate biosynthesis; chorismate from D-erythrose 4-phosphate and phosphoenolpyruvate: step 3/7. Catalyzes a trans-dehydration via an enolate intermediate. This is 3-dehydroquinate dehydratase from Synechococcus sp. (strain CC9605).